Reading from the N-terminus, the 430-residue chain is MLDPYLLRHDIKIVAKKLASKNFLLAVDKVNQQEALRKQLQIKKEHLQFIRKSKSRIVNLAKANGENITILCQEINQINEQLKQTKSELSSLKQLINDYMLLLPNIPADDVPYGSDKKDNIEIKRWGEPRKYNFPIKDHVNLGYITGNIDFTAGVKLAGTRFVVIRGQIARLYRALSQFMLDLHTQQHGYEEYYLPYLVNRTSLYGTGHLPKFYEDLFHIQSINKENISNIYTLIPTAEVPLINLLRDKIFDENILPLKMTANTPCFRAEAGSYGRDTHGLIRMHQFDKVEMVQAIKPEHSMIALEEMTKHAEKVLQLLNLHYRKVLLCTGDTGFASSKTYDLEVWLPSQNIYCEVSSCSNTSDFQTRRVLARYRNKKDKQLRFLHTINGSGLAIGRTLIAILENYQLADGRIEVPKSLRSYMQGLTILG.

L-serine is bound at residue 237–239 (TAE). 268-270 (RAE) provides a ligand contact to ATP. L-serine is bound at residue Glu-291. Residue 355–358 (EVSS) participates in ATP binding. Residue Ser-391 participates in L-serine binding.

The protein belongs to the class-II aminoacyl-tRNA synthetase family. Type-1 seryl-tRNA synthetase subfamily. As to quaternary structure, homodimer. The tRNA molecule binds across the dimer.

It is found in the cytoplasm. The catalysed reaction is tRNA(Ser) + L-serine + ATP = L-seryl-tRNA(Ser) + AMP + diphosphate + H(+). The enzyme catalyses tRNA(Sec) + L-serine + ATP = L-seryl-tRNA(Sec) + AMP + diphosphate + H(+). The protein operates within aminoacyl-tRNA biosynthesis; selenocysteinyl-tRNA(Sec) biosynthesis; L-seryl-tRNA(Sec) from L-serine and tRNA(Sec): step 1/1. In terms of biological role, catalyzes the attachment of serine to tRNA(Ser). Is also able to aminoacylate tRNA(Sec) with serine, to form the misacylated tRNA L-seryl-tRNA(Sec), which will be further converted into selenocysteinyl-tRNA(Sec). This chain is Serine--tRNA ligase, found in Baumannia cicadellinicola subsp. Homalodisca coagulata.